The chain runs to 237 residues: Eukaryotic translation initiation factor 3 subunit J (237 aa).

A disordered region spans residues 20-64; sequence ANNINKWEGEDDDEDVKESWEDEEEKKDEEKPTKTEAPAKTKPNK. Residues 28–46 are compositionally biased toward acidic residues; sequence GEDDDEDVKESWEDEEEKK. The span at 47–58 shows a compositional bias: basic and acidic residues; the sequence is DEEKPTKTEAPA. The stretch at 63-115 forms a coiled coil; sequence NKVLKAKLLEQECLEKEEEAKRLANMSTEEKLAEKLRLQKIQEESDLKSALET.

It belongs to the eIF-3 subunit J family. As to quaternary structure, component of the eukaryotic translation initiation factor 3 (eIF-3) complex. The eIF-3 complex interacts with pix.

The protein resides in the cytoplasm. Its function is as follows. Component of the eukaryotic translation initiation factor 3 (eIF-3) complex, which is involved in protein synthesis of a specialized repertoire of mRNAs and, together with other initiation factors, stimulates binding of mRNA and methionyl-tRNAi to the 40S ribosome. The eIF-3 complex specifically targets and initiates translation of a subset of mRNAs involved in cell proliferation. This Drosophila grimshawi (Hawaiian fruit fly) protein is Eukaryotic translation initiation factor 3 subunit J.